Consider the following 192-residue polypeptide: Ornithine lipid N-methyltransferase (192 aa).

Belongs to the methyltransferase superfamily.

It catalyses the reaction an N(2)-[(3R)-3-(2-saturated-acyloxy)acyl]-L-ornithine lipid + 3 S-adenosyl-L-methionine = an N,N,N-trimethylornithine lipid + 3 S-adenosyl-L-homocysteine + 3 H(+). Catalyzes the 3-fold methylation of ornithine lipids. Forms ornithine lipids that are mono-, di-, and trimethylated on the delta-nitrogen of the ornithine head group. The sequence is that of Ornithine lipid N-methyltransferase from Singulisphaera acidiphila (strain ATCC BAA-1392 / DSM 18658 / VKM B-2454 / MOB10).